A 116-amino-acid polypeptide reads, in one-letter code: Small ribosomal subunit protein uS11m (116 aa).

The protein belongs to the universal ribosomal protein uS11 family.

The protein resides in the mitochondrion. The polypeptide is Small ribosomal subunit protein uS11m (RPS11) (Chondrus crispus (Carrageen Irish moss)).